A 259-amino-acid chain; its full sequence is Succinate dehydrogenase iron-sulfur subunit (259 aa).

In terms of domain architecture, 2Fe-2S ferredoxin-type spans arginine 28–methionine 119. [2Fe-2S] cluster is bound by residues cysteine 80, cysteine 85, and cysteine 100. Residues aspartate 160 to tyrosine 190 enclose the 4Fe-4S ferredoxin-type domain. 3 residues coordinate [4Fe-4S] cluster: cysteine 170, cysteine 173, and cysteine 176. A [3Fe-4S] cluster-binding site is contributed by cysteine 180. Tryptophan 185 is an a ubiquinone binding site. Residues cysteine 227 and cysteine 233 each contribute to the [3Fe-4S] cluster site. Cysteine 237 lines the [4Fe-4S] cluster pocket.

The protein belongs to the succinate dehydrogenase/fumarate reductase iron-sulfur protein family. In terms of assembly, part of an enzyme complex containing four subunits: a flavoprotein, an iron-sulfur, cytochrome b-556, and a hydrophobic anchor protein. The cofactor is [2Fe-2S] cluster. [3Fe-4S] cluster is required as a cofactor. Requires [4Fe-4S] cluster as cofactor.

The catalysed reaction is a quinone + succinate = fumarate + a quinol. The protein operates within carbohydrate metabolism; tricarboxylic acid cycle; fumarate from succinate (bacterial route): step 1/1. This Paracoccus denitrificans protein is Succinate dehydrogenase iron-sulfur subunit (sdhB).